The following is a 378-amino-acid chain: S-adenosylmethionine:tRNA ribosyltransferase-isomerase (378 aa).

This sequence belongs to the QueA family. As to quaternary structure, monomer.

The protein resides in the cytoplasm. It carries out the reaction 7-aminomethyl-7-carbaguanosine(34) in tRNA + S-adenosyl-L-methionine = epoxyqueuosine(34) in tRNA + adenine + L-methionine + 2 H(+). It functions in the pathway tRNA modification; tRNA-queuosine biosynthesis. Transfers and isomerizes the ribose moiety from AdoMet to the 7-aminomethyl group of 7-deazaguanine (preQ1-tRNA) to give epoxyqueuosine (oQ-tRNA). The protein is S-adenosylmethionine:tRNA ribosyltransferase-isomerase of Prochlorococcus marinus (strain MIT 9312).